Reading from the N-terminus, the 156-residue chain is MPRKGPVARRDVLPDPIYNSKLVTRLINRIMVDGKRGIAQKILYNAFELVRERSGKDPMEVFDQALKNIMPVLEVKARRVGGANYQVPVEVKPERRTTLGLRWLVNYSRLRGEKTMEERLANEILDAANNTGAAVKKREDTHKMAEANKAFAHYRW.

The protein belongs to the universal ribosomal protein uS7 family. As to quaternary structure, part of the 30S ribosomal subunit. Contacts proteins S9 and S11.

Functionally, one of the primary rRNA binding proteins, it binds directly to 16S rRNA where it nucleates assembly of the head domain of the 30S subunit. Is located at the subunit interface close to the decoding center, probably blocks exit of the E-site tRNA. This is Small ribosomal subunit protein uS7 from Halalkalibacterium halodurans (strain ATCC BAA-125 / DSM 18197 / FERM 7344 / JCM 9153 / C-125) (Bacillus halodurans).